Consider the following 620-residue polypeptide: Chaperone protein HscA homolog (620 aa).

Belongs to the heat shock protein 70 family.

Chaperone involved in the maturation of iron-sulfur cluster-containing proteins. Has a low intrinsic ATPase activity which is markedly stimulated by HscB. In Pasteurella multocida (strain Pm70), this protein is Chaperone protein HscA homolog.